Reading from the N-terminus, the 168-residue chain is MPTLLLGAAIPFGTIAYTLFIFLLLLVMLRKFAWGPLMGIMKEREEHVTNEIDAAERSNAEAKKLVEEQREMLKQSRVEAQELIERAKKQAVDQKDAIVAAAKEEAESIKASAVQEIQREKEQAIAALQEQVASLSVQIASKVIEKELKEEDQVKLIRDYIKEVGEAR.

Residues 9 to 29 (AIPFGTIAYTLFIFLLLLVML) form a helical membrane-spanning segment.

Belongs to the ATPase B chain family. In terms of assembly, F-type ATPases have 2 components, F(1) - the catalytic core - and F(0) - the membrane proton channel. F(1) has five subunits: alpha(3), beta(3), gamma(1), delta(1), epsilon(1). F(0) has three main subunits: a(1), b(2) and c(10-14). The alpha and beta chains form an alternating ring which encloses part of the gamma chain. F(1) is attached to F(0) by a central stalk formed by the gamma and epsilon chains, while a peripheral stalk is formed by the delta and b chains.

The protein localises to the cell membrane. Functionally, f(1)F(0) ATP synthase produces ATP from ADP in the presence of a proton or sodium gradient. F-type ATPases consist of two structural domains, F(1) containing the extramembraneous catalytic core and F(0) containing the membrane proton channel, linked together by a central stalk and a peripheral stalk. During catalysis, ATP synthesis in the catalytic domain of F(1) is coupled via a rotary mechanism of the central stalk subunits to proton translocation. Its function is as follows. Component of the F(0) channel, it forms part of the peripheral stalk, linking F(1) to F(0). This Bacillus cereus (strain ATCC 10987 / NRS 248) protein is ATP synthase subunit b.